Consider the following 344-residue polypeptide: N-acetyl-gamma-glutamyl-phosphate reductase (344 aa).

The active site involves cysteine 150.

The protein belongs to the NAGSA dehydrogenase family. Type 1 subfamily.

It localises to the cytoplasm. It catalyses the reaction N-acetyl-L-glutamate 5-semialdehyde + phosphate + NADP(+) = N-acetyl-L-glutamyl 5-phosphate + NADPH + H(+). Its pathway is amino-acid biosynthesis; L-arginine biosynthesis; N(2)-acetyl-L-ornithine from L-glutamate: step 3/4. Catalyzes the NADPH-dependent reduction of N-acetyl-5-glutamyl phosphate to yield N-acetyl-L-glutamate 5-semialdehyde. This is N-acetyl-gamma-glutamyl-phosphate reductase from Pseudomonas syringae pv. syringae (strain B728a).